The chain runs to 120 residues: NAD(P)H-quinone oxidoreductase subunit 3, chloroplastic (120 aa).

Transmembrane regions (helical) follow at residues 7-27, 64-84, and 88-108; these read YETFWIFLLISSLMPILAFLI, MFALVFVVFDVETVFLYPWAM, and ILGISTFIEASIFVLILIVGS.

It belongs to the complex I subunit 3 family. As to quaternary structure, NDH is composed of at least 16 different subunits, 5 of which are encoded in the nucleus.

It is found in the plastid. The protein resides in the chloroplast thylakoid membrane. The catalysed reaction is a plastoquinone + NADH + (n+1) H(+)(in) = a plastoquinol + NAD(+) + n H(+)(out). It carries out the reaction a plastoquinone + NADPH + (n+1) H(+)(in) = a plastoquinol + NADP(+) + n H(+)(out). In terms of biological role, NDH shuttles electrons from NAD(P)H:plastoquinone, via FMN and iron-sulfur (Fe-S) centers, to quinones in the photosynthetic chain and possibly in a chloroplast respiratory chain. The immediate electron acceptor for the enzyme in this species is believed to be plastoquinone. Couples the redox reaction to proton translocation, and thus conserves the redox energy in a proton gradient. The sequence is that of NAD(P)H-quinone oxidoreductase subunit 3, chloroplastic from Cycas taitungensis (Prince sago).